A 618-amino-acid polypeptide reads, in one-letter code: 1-deoxy-D-xylulose-5-phosphate synthase (618 aa).

Residues histidine 70 and 111–113 each bind thiamine diphosphate; that span reads GHS. Mg(2+) is bound at residue aspartate 142. Residues 143–144, asparagine 171, tyrosine 278, and glutamate 360 contribute to the thiamine diphosphate site; that span reads GS. Mg(2+) is bound at residue asparagine 171.

Belongs to the transketolase family. DXPS subfamily. In terms of assembly, homodimer. Mg(2+) is required as a cofactor. Thiamine diphosphate serves as cofactor.

It catalyses the reaction D-glyceraldehyde 3-phosphate + pyruvate + H(+) = 1-deoxy-D-xylulose 5-phosphate + CO2. Its pathway is metabolic intermediate biosynthesis; 1-deoxy-D-xylulose 5-phosphate biosynthesis; 1-deoxy-D-xylulose 5-phosphate from D-glyceraldehyde 3-phosphate and pyruvate: step 1/1. Its function is as follows. Catalyzes the acyloin condensation reaction between C atoms 2 and 3 of pyruvate and glyceraldehyde 3-phosphate to yield 1-deoxy-D-xylulose-5-phosphate (DXP). This Helicobacter pylori (strain HPAG1) protein is 1-deoxy-D-xylulose-5-phosphate synthase.